We begin with the raw amino-acid sequence, 500 residues long: Cytochrome P450 71D13 (500 aa).

Residues 3 to 23 (LQISSAIIILVVTYTISLLII) traverse the membrane as a helical; Signal-anchor for type II membrane protein segment. C439 provides a ligand contact to heme.

Belongs to the cytochrome P450 family. Requires heme as cofactor.

It localises to the endoplasmic reticulum membrane. It catalyses the reaction (4S)-limonene + reduced [NADPH--hemoprotein reductase] + O2 = (1S,6R)-isopiperitenol + oxidized [NADPH--hemoprotein reductase] + H2O + H(+). In terms of biological role, hydroxylates (-)-(4S)-limonene to (-)-trans-isopiperitenol, a precursor of (-)-menthol, responsible for the cooling sensation of peppermint. The chain is Cytochrome P450 71D13 (CYP71D13) from Mentha piperita (Peppermint).